The following is a 277-amino-acid chain: MKQYLDLLKHITETGVAKGDRTGTGTRSVFGYQMRFNLEEGFPLVTTKKLHLKSIVYELLWFLNGDTNNQYLKEHGVRIWDEWATETGDLGPIYGRQWVAWEKPNGDTINQIEEVIQTLKKNPNSRRMLVSAWNPADLPDESMSPQENVKQGRMALATCHAFFQFYVANGKLSCQLYQRSADTFLGVPFNIASYALLTHMIAQQTDLEVGEFVWTGGDVHLYNNTLEQAELQMSRTPYALPKLKIKRKPPSIFDYEFDDFEIEGYESHPHIKAVVSV.

DUMP is bound at residue arginine 21. Residue histidine 51 coordinates (6R)-5,10-methylene-5,6,7,8-tetrahydrofolate. Position 126–127 (126–127) interacts with dUMP; that stretch reads RR. Cysteine 159 functions as the Nucleophile in the catalytic mechanism. DUMP contacts are provided by residues 179-182, asparagine 190, and 220-222; these read RSAD and HLY. (6R)-5,10-methylene-5,6,7,8-tetrahydrofolate is bound at residue aspartate 182. Serine 276 lines the (6R)-5,10-methylene-5,6,7,8-tetrahydrofolate pocket.

It belongs to the thymidylate synthase family. Bacterial-type ThyA subfamily. As to quaternary structure, homodimer.

It localises to the cytoplasm. It carries out the reaction dUMP + (6R)-5,10-methylene-5,6,7,8-tetrahydrofolate = 7,8-dihydrofolate + dTMP. Its pathway is pyrimidine metabolism; dTTP biosynthesis. Its function is as follows. Catalyzes the reductive methylation of 2'-deoxyuridine-5'-monophosphate (dUMP) to 2'-deoxythymidine-5'-monophosphate (dTMP) while utilizing 5,10-methylenetetrahydrofolate (mTHF) as the methyl donor and reductant in the reaction, yielding dihydrofolate (DHF) as a by-product. This enzymatic reaction provides an intracellular de novo source of dTMP, an essential precursor for DNA biosynthesis. This Hydrogenovibrio crunogenus (strain DSM 25203 / XCL-2) (Thiomicrospira crunogena) protein is Thymidylate synthase.